Reading from the N-terminus, the 146-residue chain is L-fucose mutarotase (146 aa).

The active-site Proton donor is the H22. Residues D30, R109, and 131-133 (YGN) contribute to the substrate site.

It belongs to the RbsD / FucU family. FucU mutarotase subfamily. Homodecamer.

The protein localises to the cytoplasm. It carries out the reaction alpha-L-fucose = beta-L-fucose. It functions in the pathway carbohydrate metabolism; L-fucose metabolism. In terms of biological role, involved in the anomeric conversion of L-fucose. The protein is L-fucose mutarotase of Glaesserella parasuis serovar 5 (strain SH0165) (Haemophilus parasuis).